Consider the following 416-residue polypeptide: MSLDYWRNIEGSYPYQTTGNDILTLKEESNPVNLSTLEKQLIGIRRHLHQYPELSKEEFETTAFIKKCLKEKGIQIRPTALKTGVFADIAGESEGPAIALRADIDALPIEEKTGLPYASKHKGIMHACGHDFHTAALLGAAFLLKENQDSLKGKIRLLFQPAEEAGAGATKVIEDGQLDGIDAVIGLHNKPDIAVGTVGLKTGPLMAAVDRFKVEIEGKGAHAALPHNGFDPIIGASQLIVALQTIVSRNVNPLQSAILTVGKINGGSTWNVIPDTVVIEGTVRTFDSEVRNQVKQRFFAVTEQISAAFSLKANVKWHSGPPPLCNDEAITGLVRDAAHKAKLQVIDPAPSTAGEDFAYYLEHIPGSFAFFGTDGDHDWHHPAFTIDETAIIKASYFLYESAKRLLDSNEESKISD.

Cys128, His130, Glu164, His188, and His380 together coordinate Zn(2+).

Belongs to the peptidase M20 family. The cofactor is Zn(2+). It depends on Co(2+) as a cofactor.

The catalysed reaction is N-acetyl-L-cysteine + H2O = L-cysteine + acetate. It participates in amino-acid metabolism. In terms of biological role, involved in a cysteine salvage pathway from S-alkylcysteine. Catalyzes the last step in this pathway, i.e. the deacetylation of N-acetyl-L-cysteine. This pathway is likely important in the catabolism of alkylated cysteine generated by proteolysis of alkylated glutathione formed in the detoxification of a wide range of electrophiles. The chain is N-acetyl-L-cysteine deacetylase from Bacillus subtilis (strain 168).